Consider the following 464-residue polypeptide: Protein FAM90A8 (464 aa).

3 disordered regions span residues 1–42, 69–389, and 415–437; these read MMAR…DPRL, VPAT…HDGA, and HSPEKPGAFLAQSPHVSEKSEAP. Composition is skewed to basic and acidic residues over residues 74-89 and 97-114; these read GKKEGKENLKPWKPRG and NKDKGEKEERPRQQDPQR. Residues 180–197 show a composition bias toward low complexity; that stretch reads LASLSPLRKASLSSSSSL.

Belongs to the FAM90 family.

The protein is Protein FAM90A8 (FAM90A8) of Homo sapiens (Human).